The sequence spans 444 residues: Putative dipeptidase CPC735_015490 (444 aa).

An N-terminal signal peptide occupies residues M1–A34. Zn(2+) contacts are provided by H67, D69, and E178. C118 and C207 form a disulfide bridge. H205 contributes to the substrate binding site. 2 residues coordinate Zn(2+): H250 and H271. The substrate site is built by R282 and D342. N413 carries N-linked (GlcNAc...) asparagine glycosylation.

This sequence belongs to the metallo-dependent hydrolases superfamily. Peptidase M19 family. Requires Zn(2+) as cofactor.

It catalyses the reaction an L-aminoacyl-L-amino acid + H2O = 2 an L-alpha-amino acid. Functionally, hydrolyzes a wide range of dipeptides. This is Putative dipeptidase CPC735_015490 from Coccidioides posadasii (strain C735) (Valley fever fungus).